The primary structure comprises 214 residues: Large ribosomal subunit protein uL3 (214 aa).

Gln-153 carries the N5-methylglutamine modification.

This sequence belongs to the universal ribosomal protein uL3 family. In terms of assembly, part of the 50S ribosomal subunit. Forms a cluster with proteins L14 and L19. Methylated by PrmB.

Functionally, one of the primary rRNA binding proteins, it binds directly near the 3'-end of the 23S rRNA, where it nucleates assembly of the 50S subunit. The protein is Large ribosomal subunit protein uL3 of Methylobacillus flagellatus (strain ATCC 51484 / DSM 6875 / VKM B-1610 / KT).